The chain runs to 95 residues: Alpha-defensin 20 (95 aa).

The signal sequence occupies residues 1–19; that stretch reads MKTLVLLSALVLLAFQVQA. The propeptide occupies 20 to 58; the sequence is DPIQNTDEETNTEEQPGEEDQAVSVSFGDPEGSALHEKS. The disordered stretch occupies residues 22–57; it reads IQNTDEETNTEEQPGEEDQAVSVSFGDPEGSALHEK. Residues 25-40 show a composition bias toward acidic residues; that stretch reads TDEETNTEEQPGEEDQ. Cystine bridges form between Cys-64–Cys-89, Cys-66–Cys-81, and Cys-71–Cys-88.

Belongs to the alpha-defensin family.

It is found in the secreted. Functionally, may have microbicidal activities. The sequence is that of Alpha-defensin 20 (Defa20) from Mus musculus (Mouse).